The chain runs to 146 residues: UPF0260 protein Spea_2441 (146 aa).

Belongs to the UPF0260 family.

The chain is UPF0260 protein Spea_2441 from Shewanella pealeana (strain ATCC 700345 / ANG-SQ1).